We begin with the raw amino-acid sequence, 212 residues long: Ras-related protein Rab-2A (212 aa).

N-acetylalanine is present on Ala2. The segment at 2-19 (AYAYLFKYIIIGDTGVGK) is required for interaction with PRKCI. Residues Gly16, Val17, Gly18, Lys19, Ser20, Cys21, and Thr38 each contribute to the GTP site. Ser20 lines the Mg(2+) pocket. Positions 37–42 (LTIGVE) match the Switch 1 motif. The Mg(2+) site is built by Thr38 and Asp61. The Switch 2 motif lies at 63-72 (AGQESFRSIT). GTP is bound by residues Gly64, Asn119, Lys120, Asp122, Ala150, and Lys151. S-geranylgeranyl cysteine attachment occurs at residues Cys211 and Cys212.

This sequence belongs to the small GTPase superfamily. Rab family. In terms of assembly, interacts with PRKCI. Interacts with TRIP11. Interacts (in GTP-bound form) with GARIN1B. Interacts (GTP-bound) with HOPS complex component VPS39; interaction contributes to obtaining a functional HOPS complex that promotes autophagosome-lysosome membrane fusion driven by STX17-SNAP29-VAMP8. May interact with VPS41. It depends on Mg(2+) as a cofactor. In terms of processing, prenylated. Prenylation is required for association with cellular membranes. As to expression, brain and parietal cells.

It is found in the endoplasmic reticulum-Golgi intermediate compartment membrane. The protein localises to the melanosome. It localises to the endoplasmic reticulum membrane. The protein resides in the golgi apparatus membrane. Its subcellular location is the cytoplasmic vesicle. It is found in the secretory vesicle. The protein localises to the acrosome. It localises to the autophagosome membrane. It carries out the reaction GTP + H2O = GDP + phosphate + H(+). Regulated by guanine nucleotide exchange factors (GEFs) which promote the exchange of bound GDP for free GTP, GTPase activating proteins (GAPs) which increase the GTP hydrolysis activity, and GDP dissociation inhibitors (GDIs) which inhibit the dissociation of the nucleotide from the GTPase. Its function is as follows. The small GTPases Rab are key regulators of intracellular membrane trafficking, from the formation of transport vesicles to their fusion with membranes. Rabs cycle between active GTP-bound and inactive GDP-bound states. In their active state, drive transport of vesicular carriers from donor organelles to acceptor organelles to regulate the membrane traffic that maintains organelle identity and morphology. RAB2A regulates autophagy by promoting autophagosome-lysosome fusion via recruitment of the HOPS endosomal tethering complex; this process involves autophagosomal RAB2A and lysosomal RAB39A recruitment of HOPS subcomplexes VPS39-VPS11 and VPS41-VPS16-VPS18-VPS33A, respectively, which assemble into a functional complex to mediate membrane tethering and SNAREs-driven membrane fusion. Required for protein transport from the endoplasmic reticulum to the Golgi complex. Regulates the compacted morphology of the Golgi. Together with RAB2B, redundantly required for efficient autophagic flux. The polypeptide is Ras-related protein Rab-2A (RAB2A) (Oryctolagus cuniculus (Rabbit)).